The primary structure comprises 325 residues: Probable cell division protein WhiA (325 aa).

The segment at residues 280–313 is a DNA-binding region (H-T-H motif); that stretch reads SLKELGNMLEKPLGKSGVNHRLRKIDKIAEELRK.

Belongs to the WhiA family.

Functionally, involved in cell division and chromosome segregation. The chain is Probable cell division protein WhiA from Caldicellulosiruptor bescii (strain ATCC BAA-1888 / DSM 6725 / KCTC 15123 / Z-1320) (Anaerocellum thermophilum).